The primary structure comprises 455 residues: Probable glycine dehydrogenase (decarboxylating) subunit 1 (455 aa).

It belongs to the GcvP family. N-terminal subunit subfamily. As to quaternary structure, the glycine cleavage system is composed of four proteins: P, T, L and H. In this organism, the P 'protein' is a heterodimer of two subunits.

It carries out the reaction N(6)-[(R)-lipoyl]-L-lysyl-[glycine-cleavage complex H protein] + glycine + H(+) = N(6)-[(R)-S(8)-aminomethyldihydrolipoyl]-L-lysyl-[glycine-cleavage complex H protein] + CO2. Its function is as follows. The glycine cleavage system catalyzes the degradation of glycine. The P protein binds the alpha-amino group of glycine through its pyridoxal phosphate cofactor; CO(2) is released and the remaining methylamine moiety is then transferred to the lipoamide cofactor of the H protein. In Francisella tularensis subsp. holarctica (strain LVS), this protein is Probable glycine dehydrogenase (decarboxylating) subunit 1.